The chain runs to 303 residues: MEYFYTSQCPDMDHLRSLSVANRWLETDLPLGDDAKDVAALSEPELEFYRFLFAFLSAADDLVNVNLGSLSELFTQKDILHYYIEQECIEVVHSRVYSAIQLMLFRGDAAARERYVRAALRDEAIRRKVEWLDSRVAECASVAEKYLLMILIEGIFFASSFASISYLRTHNLFVVTCQSNDFISRDEAIHTSASCCIYNNYLGDAPRPDEARIHQLFAEAVEIECEFLRARAPRDSLLLDLPAIISYVRYSADRLLQAIGASPLFGAPAPAADFPMALMVAEKHTNFFERRSTNYTGTVVNDL.

Positions 60, 90, and 93 each coordinate Fe cation. The active site involves Tyr-97. Residues 147–167 (LLMILIEGIFFASSFASISYL) traverse the membrane as a helical segment. Residues Glu-153, Glu-187, and His-190 each coordinate Fe cation.

This sequence belongs to the ribonucleoside diphosphate reductase small chain family. Heterotetramer composed of a homodimer of the large subunit (R1) and a homodimer of the small subunit (R2). Larger multisubunit protein complex are also active, composed of (R1)n(R2)n. It depends on Fe cation as a cofactor.

Its subcellular location is the host membrane. The catalysed reaction is a 2'-deoxyribonucleoside 5'-diphosphate + [thioredoxin]-disulfide + H2O = a ribonucleoside 5'-diphosphate + [thioredoxin]-dithiol. In terms of biological role, ribonucleoside-diphosphate reductase holoenzyme provides the precursors necessary for viral DNA synthesis. Allows virus growth in non-dividing cells, as well as reactivation from latency in infected hosts. Catalyzes the biosynthesis of deoxyribonucleotides from the corresponding ribonucleotides. The chain is Ribonucleoside-diphosphate reductase small subunit from Suid herpesvirus 1 (strain Kaplan) (SuHV-1).